The primary structure comprises 432 residues: Phosphomethylpyrimidine synthase (432 aa).

Residues N66, M95, Y124, H163, 185-187, 226-229, and E265 each bind substrate; these read SRG and DGLR. H269 provides a ligand contact to Zn(2+). Y292 lines the substrate pocket. Zn(2+) is bound at residue H333. [4Fe-4S] cluster-binding residues include C409, C412, and C416.

Belongs to the ThiC family. [4Fe-4S] cluster serves as cofactor.

The enzyme catalyses 5-amino-1-(5-phospho-beta-D-ribosyl)imidazole + S-adenosyl-L-methionine = 4-amino-2-methyl-5-(phosphooxymethyl)pyrimidine + CO + 5'-deoxyadenosine + formate + L-methionine + 3 H(+). Its pathway is cofactor biosynthesis; thiamine diphosphate biosynthesis. In terms of biological role, catalyzes the synthesis of the hydroxymethylpyrimidine phosphate (HMP-P) moiety of thiamine from aminoimidazole ribotide (AIR) in a radical S-adenosyl-L-methionine (SAM)-dependent reaction. This Thermoanaerobacter pseudethanolicus (strain ATCC 33223 / 39E) (Clostridium thermohydrosulfuricum) protein is Phosphomethylpyrimidine synthase.